The primary structure comprises 183 residues: Seminal plasma protein BSP-30 kDa (183 aa).

The first 25 residues, 1–25 (MAPLVGLFLIWAGASVFQQLHPVNG), serve as a signal peptide directing secretion. A disordered region spans residues 23-47 (VNGGDIPDPGSKPTPPGMADELPTE). O-linked (GalNAc...) threonine glycosylation is found at threonine 36, threonine 46, threonine 57, threonine 58, threonine 59, and threonine 64. 2 Fibronectin type-II domains span residues 92 to 136 (FEGP…FCTE) and 137 to 183 (RDEP…WKYC). Intrachain disulfides connect cysteine 97/cysteine 121, cysteine 111/cysteine 134, cysteine 142/cysteine 168, and cysteine 156/cysteine 183.

The protein belongs to the seminal plasma protein family.

The protein localises to the secreted. Functionally, binds to spermatozoa upon ejaculation and may play a role in sperm capacitation. Displays heparin-, gelatin- and phospholipid-binding activities. This chain is Seminal plasma protein BSP-30 kDa, found in Bos taurus (Bovine).